The following is a 215-amino-acid chain: Large ribosomal subunit protein uL4 (215 aa).

Residues 51 to 88 form a disordered region; sequence KGMGEVSGTTKKPYRQKGTGNARQGSLRAPQFRTGGAV.

Belongs to the universal ribosomal protein uL4 family. Part of the 50S ribosomal subunit.

Its function is as follows. One of the primary rRNA binding proteins, this protein initially binds near the 5'-end of the 23S rRNA. It is important during the early stages of 50S assembly. It makes multiple contacts with different domains of the 23S rRNA in the assembled 50S subunit and ribosome. Forms part of the polypeptide exit tunnel. The chain is Large ribosomal subunit protein uL4 from Granulibacter bethesdensis (strain ATCC BAA-1260 / CGDNIH1).